A 194-amino-acid chain; its full sequence is MRKFVAFFVIVALAALLAGCGGQGEQEQKPSEQKTTTTVAESKGIETLSDLYNSKKMVHGTAKVTLQGETTTVEFWYYFDMPNKETLLRYEGEQGGMGKMTAIIKNKYSGTTLTQTMYMKSEKMEAQGCDWIVITQTSTISQSESNIGDEPVEDAFKSTFASQGNVWEYEVETVDYNPSLFQPDGKVCQFSYGS.

Positions M1–G24 are cleaved as a signal peptide.

This is an uncharacterized protein from Archaeoglobus fulgidus (strain ATCC 49558 / DSM 4304 / JCM 9628 / NBRC 100126 / VC-16).